Here is a 123-residue protein sequence, read N- to C-terminus: Methicillin resistance regulatory protein MecI (123 aa).

A DNA-binding region (H-T-H motif) is located at residues 7–71 (EISSAEWEVM…KDNKIFQYYS (65 aa)). The interval 74-123 (EESDIKYKTSKNFINKVYKGGFNSLVLNFVEKEDLSQDEIEELRNILNKK) is important for dimerization.

This sequence belongs to the BlaI transcriptional regulatory family. In terms of assembly, monomer and homodimer. Upon exposure to beta-lactams, proteolytic cleavage at a single site impairs dimerization and abolishes repressor activity.

It localises to the cytoplasm. Its function is as follows. Transcriptional repressor that constitutively blocks the transcription of the gene for the penicillin-binding protein MecA. Binds palindromic DNA with the sequence 5'-TACA-[AT]-N-TGTA-3'. Regulates genes involved in antibiotic resistance. Binds DNA as a dimer. The chain is Methicillin resistance regulatory protein MecI (mecI) from Staphylococcus aureus (strain N315).